A 391-amino-acid chain; its full sequence is Phosphopentomutase (391 aa).

Mn(2+) is bound at residue aspartate 14. The segment at 61–88 is disordered; the sequence is IQGVPPDPAPTAFHGRMAERSEGKDTTT. Residues 76-87 are compositionally biased toward basic and acidic residues; sequence RMAERSEGKDTT. Residues aspartate 286, histidine 291, aspartate 327, histidine 328, and histidine 339 each contribute to the Mn(2+) site.

The protein belongs to the phosphopentomutase family. The cofactor is Mn(2+).

The protein resides in the cytoplasm. It carries out the reaction 2-deoxy-alpha-D-ribose 1-phosphate = 2-deoxy-D-ribose 5-phosphate. It catalyses the reaction alpha-D-ribose 1-phosphate = D-ribose 5-phosphate. It participates in carbohydrate degradation; 2-deoxy-D-ribose 1-phosphate degradation; D-glyceraldehyde 3-phosphate and acetaldehyde from 2-deoxy-alpha-D-ribose 1-phosphate: step 1/2. In terms of biological role, isomerase that catalyzes the conversion of deoxy-ribose 1-phosphate (dRib-1-P) and ribose 1-phosphate (Rib-1-P) to deoxy-ribose 5-phosphate (dRib-5-P) and ribose 5-phosphate (Rib-5-P), respectively. This is Phosphopentomutase from Anaeromyxobacter dehalogenans (strain 2CP-C).